A 524-amino-acid chain; its full sequence is Alkaline phosphatase, tissue-nonspecific isozyme (524 aa).

Residues 1–17 (MISPFLVLAIGTCLTNS) form the signal peptide. Asp-60 contributes to the Mg(2+) binding site. Zn(2+)-binding residues include Asp-60 and Ser-110. Ser-110 (phosphoserine intermediate) is an active-site residue. Ser-110 carries the post-translational modification Phosphoserine. Cys-139 and Cys-201 are oxidised to a cystine. Residue Asn-140 is glycosylated (N-linked (GlcNAc...) asparagine). Position 173 (Thr-173) interacts with Mg(2+). Asn-230 carries N-linked (GlcNAc...) asparagine glycosylation. Glu-235 lines the Ca(2+) pocket. An N-linked (GlcNAc...) asparagine glycan is attached at Asn-271. Positions 290 and 291 each coordinate Ca(2+). Asn-303 carries an N-linked (GlcNAc...) asparagine glycan. Asp-306 contacts Ca(2+). Glu-332 is a binding site for Mg(2+). Zn(2+) contacts are provided by Asp-337, His-341, Asp-378, and His-379. N-linked (GlcNAc...) asparagine glycosylation occurs at Asn-430. A Zn(2+)-binding site is contributed by His-454. Cys-489 and Cys-497 are oxidised to a cystine. Gly-501 carries GPI-anchor amidated glycine lipidation. Residues 502-524 (SGSAPSPGALLLPLAVLSLRTLF) constitute a propeptide, removed in mature form.

This sequence belongs to the alkaline phosphatase family. As to quaternary structure, homodimer. It depends on Mg(2+) as a cofactor. Zn(2+) serves as cofactor. Ca(2+) is required as a cofactor. N-glycosylated. As to expression, widely expressed. Expressed in DRG neurons and spinal cord neurons.

The protein resides in the cell membrane. Its subcellular location is the extracellular vesicle membrane. It is found in the mitochondrion membrane. It localises to the mitochondrion intermembrane space. The catalysed reaction is a phosphate monoester + H2O = an alcohol + phosphate. It carries out the reaction diphosphate + H2O = 2 phosphate + H(+). The enzyme catalyses pyridoxal 5'-phosphate + H2O = pyridoxal + phosphate. It catalyses the reaction phosphoethanolamine + H2O = ethanolamine + phosphate. The catalysed reaction is N-phosphocreatine + H2O = creatine + phosphate. It carries out the reaction ATP + H2O = ADP + phosphate + H(+). The enzyme catalyses ADP + H2O = AMP + phosphate + H(+). It catalyses the reaction AMP + H2O = adenosine + phosphate. Phosphatase activity is specifically inhibited by 5-((5-chloro-2-methoxyphenyl)sulfonamido)nicotinamide (SBI-425). Its function is as follows. Alkaline phosphatase that metabolizes various phosphate compounds and plays a key role in skeletal mineralization and adaptive thermogenesis. Has broad substrate specificity and can hydrolyze a considerable variety of compounds: however, only a few substrates, such as diphosphate (inorganic pyrophosphate; PPi), pyridoxal 5'-phosphate (PLP) and N-phosphocreatine are natural substrates. Plays an essential role in skeletal and dental mineralization via its ability to hydrolyze extracellular diphosphate, a potent mineralization inhibitor, to phosphate: it thereby promotes hydroxyapatite crystal formation and increases inorganic phosphate concentration. Acts in a non-redundant manner with PHOSPHO1 in skeletal mineralization: while PHOSPHO1 mediates the initiation of hydroxyapatite crystallization in the matrix vesicles (MVs), ALPL/TNAP catalyzes the spread of hydroxyapatite crystallization in the extracellular matrix. Also promotes dephosphorylation of osteopontin (SSP1), an inhibitor of hydroxyapatite crystallization in its phosphorylated state; it is however unclear whether ALPL/TNAP mediates SSP1 dephosphorylation via a direct or indirect manner. Catalyzes dephosphorylation of PLP to pyridoxal (PL), the transportable form of vitamin B6, in order to provide a sufficient amount of PLP in the brain, an essential cofactor for enzymes catalyzing the synthesis of diverse neurotransmitters. Additionally, also able to mediate ATP degradation in a stepwise manner to adenosine, thereby regulating the availability of ligands for purinergic receptors. Also capable of dephosphorylating microbial products, such as lipopolysaccharides (LPS) as well as other phosphorylated small-molecules, such as poly-inosine:cytosine (poly I:C). Acts as a key regulator of adaptive thermogenesis as part of the futile creatine cycle: localizes to the mitochondria of thermogenic fat cells and acts by mediating hydrolysis of N-phosphocreatine to initiate a futile cycle of creatine dephosphorylation and phosphorylation. During the futile creatine cycle, creatine and N-phosphocreatine are in a futile cycle, which dissipates the high energy charge of N-phosphocreatine as heat without performing any mechanical or chemical work. This chain is Alkaline phosphatase, tissue-nonspecific isozyme, found in Mus musculus (Mouse).